Consider the following 104-residue polypeptide: Large ribosomal subunit protein uL24 (104 aa).

Belongs to the universal ribosomal protein uL24 family. In terms of assembly, part of the 50S ribosomal subunit.

One of two assembly initiator proteins, it binds directly to the 5'-end of the 23S rRNA, where it nucleates assembly of the 50S subunit. In terms of biological role, one of the proteins that surrounds the polypeptide exit tunnel on the outside of the subunit. This Clostridium botulinum (strain Alaska E43 / Type E3) protein is Large ribosomal subunit protein uL24.